The sequence spans 511 residues: Putative thymidine phosphorylase (511 aa).

The protein belongs to the thymidine/pyrimidine-nucleoside phosphorylase family. Type 2 subfamily.

It catalyses the reaction thymidine + phosphate = 2-deoxy-alpha-D-ribose 1-phosphate + thymine. The protein is Putative thymidine phosphorylase of Polaromonas sp. (strain JS666 / ATCC BAA-500).